The following is a 101-amino-acid chain: DNA-binding protein Fis (101 aa).

Positions 77–96 (QTRAANMLGINRGTLRKKLK) form a DNA-binding region, H-T-H motif.

The protein belongs to the transcriptional regulatory Fis family. Homodimer.

Functionally, activates ribosomal RNA transcription. Plays a direct role in upstream activation of rRNA promoters. This is DNA-binding protein Fis from Shewanella pealeana (strain ATCC 700345 / ANG-SQ1).